The sequence spans 221 residues: Small ribosomal subunit protein uS3 (221 aa).

Residues 39 to 108 (IRKFVKKELF…NILINIVEVK (70 aa)) enclose the KH type-2 domain.

This sequence belongs to the universal ribosomal protein uS3 family. As to quaternary structure, part of the 30S ribosomal subunit. Forms a tight complex with proteins S10 and S14.

In terms of biological role, binds the lower part of the 30S subunit head. Binds mRNA in the 70S ribosome, positioning it for translation. This is Small ribosomal subunit protein uS3 from Clostridium botulinum (strain Alaska E43 / Type E3).